The primary structure comprises 256 residues: Hemin import ATP-binding protein HmuV (256 aa).

An ABC transporter domain is found at 2-239 (IHAFAVSVIR…ANVREVYQVD (238 aa)). 34–41 (GPNGAGKS) is a binding site for ATP.

It belongs to the ABC transporter superfamily. Heme (hemin) importer (TC 3.A.1.14.5) family. The complex is composed of two ATP-binding proteins (HmuV), two transmembrane proteins (HmuU) and a solute-binding protein (HmuT).

The protein localises to the cell inner membrane. Functionally, part of the ABC transporter complex HmuTUV involved in hemin import. Responsible for energy coupling to the transport system. This chain is Hemin import ATP-binding protein HmuV, found in Hahella chejuensis (strain KCTC 2396).